Reading from the N-terminus, the 322-residue chain is MSDSLIDLLLEVGKALIVLVGIVGAGAFMSFIERRLLALWQDRYGPNRVGPFGLLQLAADMIKMFFKEDWIPPFADRRIFILAPIIAFTAFILAFAVVPLTPTWGVADLNVGLLYILAIAGLAVYAVLFAGWSSNNKYSLLGSLRASAQTLSYEVFLGLSLMGIVIQTGSFNLRDIVEAQAGLWNVVPQILGFITFLFAGVAVTHRHPFDQPEAEQELADGYHIEYAGMKWGLFFVGEYIGIVLISSLIVTLFFGGWHGPWLPPFIWFALKTACFMVFFILLRASLPRPRFDQVMSFGWKVCLPLTLVNMLITGAVVLINVQ.

Helical transmembrane passes span 12–32, 79–99, 111–131, 151–171, 183–203, 234–254, 262–282, and 301–321; these read VGKA…MSFI, IFIL…AVVP, VGLL…LFAG, LSYE…TGSF, LWNV…GVAV, FFVG…TLFF, LPPF…FILL, and VCLP…LINV.

It belongs to the complex I subunit 1 family. In terms of assembly, NDH-1 is composed of 14 different subunits. Subunits NuoA, H, J, K, L, M, N constitute the membrane sector of the complex.

Its subcellular location is the cell inner membrane. It carries out the reaction a quinone + NADH + 5 H(+)(in) = a quinol + NAD(+) + 4 H(+)(out). Functionally, NDH-1 shuttles electrons from NADH, via FMN and iron-sulfur (Fe-S) centers, to quinones in the respiratory chain. The immediate electron acceptor for the enzyme in this species is believed to be ubiquinone. Couples the redox reaction to proton translocation (for every two electrons transferred, four hydrogen ions are translocated across the cytoplasmic membrane), and thus conserves the redox energy in a proton gradient. This subunit may bind ubiquinone. In Aeromonas salmonicida (strain A449), this protein is NADH-quinone oxidoreductase subunit H.